The chain runs to 1073 residues: Ubiquitin carboxyl-terminal hydrolase 53 (1073 aa).

In terms of domain architecture, USP spans 30–351; that stretch reads KGLLNEPGQN…QPLLLFYANP (322 aa). Cysteine 41 functions as the Nucleophile in the catalytic mechanism. Residues histidine 66, cysteine 68, cysteine 73, cysteine 76, histidine 132, cysteine 144, cysteine 149, histidine 152, cysteine 165, cysteine 168, cysteine 224, and cysteine 228 each coordinate Zn(2+). The active-site Proton acceptor is the histidine 301. 2 disordered regions span residues 391–437 and 485–636; these read LKEN…HIDQ and LSHF…PKQK. Residues 407–418 are compositionally biased toward polar residues; sequence KFPTDNISSSNR. The span at 524–541 shows a compositional bias: low complexity; the sequence is QSRASAQIISSSKSQILA. A compositionally biased stretch (polar residues) spans 553-563; it reads DNGTGYDTDSS. Residues 612–627 are compositionally biased toward low complexity; that stretch reads NISNKPKSSKDPSFSN.

It belongs to the peptidase C19 family. In terms of assembly, interacts (via the C-terminal region) with the heterodimer TJP1:TJP2. In terms of tissue distribution, expressed predominantly in skeletal muscle and heart.

Its subcellular location is the cell junction. It localises to the tight junction. The catalysed reaction is Thiol-dependent hydrolysis of ester, thioester, amide, peptide and isopeptide bonds formed by the C-terminal Gly of ubiquitin (a 76-residue protein attached to proteins as an intracellular targeting signal).. Deubiquitinase that mediates 'Lys-63'-linked deubiquitination of tight junction proteins, such as MARVELD2 and LSR, and which is involved in the survival of auditory hair cells and hearing. Specifically cleaves 'Lys-63'-linked polyubiquitin chains composed of at least 3 ubiquitin molecules, while it is not able to deubiquitinate substrates with shorter ubiquitin chains: recognizes ubiquitin chain in position S2 and catalyzes en bloc cleavage of polyubiquitin chains from substrate proteins. Probably acts by modulating the barrier properties and mechanical stability of tight junctions via deubiquitination of MARVELD2 and LSR. The sequence is that of Ubiquitin carboxyl-terminal hydrolase 53 from Homo sapiens (Human).